The following is a 337-amino-acid chain: tRNA N6-adenosine threonylcarbamoyltransferase (337 aa).

Fe cation-binding residues include His111 and His115. Substrate is bound by residues Leu134–Gly138, Asp167, Gly180, and Asn272. Asp300 lines the Fe cation pocket.

It belongs to the KAE1 / TsaD family. The cofactor is Fe(2+).

Its subcellular location is the cytoplasm. It carries out the reaction L-threonylcarbamoyladenylate + adenosine(37) in tRNA = N(6)-L-threonylcarbamoyladenosine(37) in tRNA + AMP + H(+). Required for the formation of a threonylcarbamoyl group on adenosine at position 37 (t(6)A37) in tRNAs that read codons beginning with adenine. Is involved in the transfer of the threonylcarbamoyl moiety of threonylcarbamoyl-AMP (TC-AMP) to the N6 group of A37, together with TsaE and TsaB. TsaD likely plays a direct catalytic role in this reaction. This chain is tRNA N6-adenosine threonylcarbamoyltransferase, found in Escherichia coli O127:H6 (strain E2348/69 / EPEC).